The primary structure comprises 535 residues: Zinc transporter ZIP5 (535 aa).

The N-terminal stretch at 1-19 is a signal peptide; it reads MGPPVHHLLTGLCVGVALG. Topologically, residues 20 to 210 are extracellular; the sequence is WVGGSVPNLG…PAPPGDVLSA (191 aa). Residues Asn49 and Asn158 are each glycosylated (N-linked (GlcNAc...) asparagine). The helical transmembrane segment at 211–231 threads the bilayer; that stretch reads LLHSGLAVLFLSLPAPLSLLL. The Cytoplasmic segment spans residues 232–242; the sequence is LRLLGPRLLRP. A helical transmembrane segment spans residues 243 to 263; sequence VLGFLGALAVGTLCGDALLHL. The Extracellular portion of the chain corresponds to 264-285; that stretch reads LPHAQGGRHTGPSEQSEEDLGP. Residues 286 to 306 traverse the membrane as a helical segment; sequence GLSVLGGLFLLFMLENTLGLV. At 307-439 the chain is on the cytoplasmic side; it reads RHRGLRPRCC…LLQEGLSFRK (133 aa). A disordered region spans residues 316–373; the sequence is CRNKRDLGEPNPDPEDGSGMVLRPLQAASEPEVQGQRENRQSSPSLAPPGHQGHSHEH. Ser333 is modified (phosphoserine). Position 371 is a pros-methylhistidine (His371). The helical transmembrane segment at 440 to 460 threads the bilayer; that stretch reads LLLLSLVSGALGLGGAALGVG. The Extracellular portion of the chain corresponds to 461–465; it reads LSLGP. A helical membrane pass occupies residues 466 to 486; the sequence is VPLTPWVFGTTAGVFLYVALV. The Cytoplasmic portion of the chain corresponds to 487-503; that stretch reads DMLPTLLRPPEPLPVFH. A helical transmembrane segment spans residues 504-524; it reads VLLQGLGLLLGGSLMFTIALL. Topologically, residues 525–535 are extracellular; that stretch reads EEQLVPTVPDG.

The protein belongs to the ZIP transporter (TC 2.A.5) family. In terms of assembly, homodimer. In terms of processing, N-Glycosylated. Methylated at His-371 by METTL9. In terms of tissue distribution, expressed in all stages of eye development and primarily in the sclera and several layers of the retina, including the inner segment, outer plexiform layer and ganglion cell layer. Expressed in pancreas, kidney and the proximal and distal small intestine as well as in the embryonic visceral yolk sac. In the proximal intestine, expression is predominant in the crypts but diminishes toward the apical regions of the villi.

The protein localises to the basolateral cell membrane. The catalysed reaction is Zn(2+)(in) = Zn(2+)(out). Functionally, uniporter that transports zinc(2+) into polarized cells of enterocytes, pancreatic acinar and endoderm cells across the basolateral membrane and participates, notably, in zinc excretion from the intestine by the uptake of zinc from the blood into the intestine. The transport mechanism is temperature- and concentration-dependent and saturable. In addition, is also a high affinity copper transporter in vitro. Also may regulate glucose-stimulated insulin secretion (GSIS) in islets primarily through the zinc-activated SIRT1-PPARGC1A axis. Could regulate the BMP/TGF-beta (bone morphogenetic protein/transforming growth factor-beta) signaling pathway and modulates extracellular matrix (ECM) proteins of the sclera. Plays a role in eye development. The sequence is that of Zinc transporter ZIP5 from Mus musculus (Mouse).